Here is a 288-residue protein sequence, read N- to C-terminus: Homoserine kinase (288 aa).

79 to 89 provides a ligand contact to ATP; it reads PPARGLGSSSA.

This sequence belongs to the GHMP kinase family. Homoserine kinase subfamily.

The protein resides in the cytoplasm. The catalysed reaction is L-homoserine + ATP = O-phospho-L-homoserine + ADP + H(+). It functions in the pathway amino-acid biosynthesis; L-threonine biosynthesis; L-threonine from L-aspartate: step 4/5. Catalyzes the ATP-dependent phosphorylation of L-homoserine to L-homoserine phosphate. The sequence is that of Homoserine kinase from Listeria monocytogenes serotype 4b (strain CLIP80459).